A 156-amino-acid polypeptide reads, in one-letter code: Ribosomal RNA large subunit methyltransferase H (156 aa).

Residues Leu73, Gly104, and 123–128 (LSALTL) contribute to the S-adenosyl-L-methionine site.

This sequence belongs to the RNA methyltransferase RlmH family. As to quaternary structure, homodimer.

The protein resides in the cytoplasm. The catalysed reaction is pseudouridine(1915) in 23S rRNA + S-adenosyl-L-methionine = N(3)-methylpseudouridine(1915) in 23S rRNA + S-adenosyl-L-homocysteine + H(+). Its function is as follows. Specifically methylates the pseudouridine at position 1915 (m3Psi1915) in 23S rRNA. In Shewanella sp. (strain MR-7), this protein is Ribosomal RNA large subunit methyltransferase H.